Consider the following 968-residue polypeptide: RNA polymerase-associated protein RapA (968 aa).

In terms of domain architecture, Helicase ATP-binding spans 164–334 (EVGQRHAPRV…FARLRLLDPD (171 aa)). Residue 177-184 (DEVGLGKT) participates in ATP binding. A DEAH box motif is present at residues 280–283 (DEAH). The 155-residue stretch at 490–644 (RVEWLLNYLV…TCPTGRTIYD (155 aa)) folds into the Helicase C-terminal domain.

It belongs to the SNF2/RAD54 helicase family. RapA subfamily. As to quaternary structure, interacts with the RNAP. Has a higher affinity for the core RNAP than for the holoenzyme. Its ATPase activity is stimulated by binding to RNAP.

Transcription regulator that activates transcription by stimulating RNA polymerase (RNAP) recycling in case of stress conditions such as supercoiled DNA or high salt concentrations. Probably acts by releasing the RNAP, when it is trapped or immobilized on tightly supercoiled DNA. Does not activate transcription on linear DNA. Probably not involved in DNA repair. The protein is RNA polymerase-associated protein RapA of Yersinia pseudotuberculosis serotype O:1b (strain IP 31758).